Consider the following 186-residue polypeptide: Ribosome maturation factor RimM (186 aa).

The PRC barrel domain maps to 93–168 (EDDFYLVDLI…VLIDPPQEEN (76 aa)). Residues 163–186 (PPQEENAPEFGRNELGHDDGGEAA) form a disordered region. Basic and acidic residues predominate over residues 173–186 (GRNELGHDDGGEAA).

It belongs to the RimM family. Binds ribosomal protein uS19.

The protein resides in the cytoplasm. Functionally, an accessory protein needed during the final step in the assembly of 30S ribosomal subunit, possibly for assembly of the head region. Essential for efficient processing of 16S rRNA. May be needed both before and after RbfA during the maturation of 16S rRNA. It has affinity for free ribosomal 30S subunits but not for 70S ribosomes. The sequence is that of Ribosome maturation factor RimM from Granulibacter bethesdensis (strain ATCC BAA-1260 / CGDNIH1).